Here is a 116-residue protein sequence, read N- to C-terminus: T cell receptor alpha variable 38-2/delta variable 8 (116 aa).

A signal peptide spans 1–21 (MACPGFLWALVISTCLEFSMA). Residues 22–116 (QTVTQSQPEM…AAMYFCAYRS (95 aa)) enclose the Ig-like domain. An intrachain disulfide couples Cys-43 to Cys-112. N-linked (GlcNAc...) asparagine glycosylation occurs at Asn-78.

As to quaternary structure, alpha-beta TR is a heterodimer composed of an alpha and beta chain; disulfide-linked. The alpha-beta TR is associated with the transmembrane signaling CD3 coreceptor proteins to form the TR-CD3 (TcR or TCR). The assembly of alpha-beta TR heterodimers with CD3 occurs in the endoplasmic reticulum where a single alpha-beta TR heterodimer associates with one CD3D-CD3E heterodimer, one CD3G-CD3E heterodimer and one CD247 homodimer forming a stable octameric structure. CD3D-CD3E and CD3G-CD3E heterodimers preferentially associate with TR alpha and TR beta chains, respectively. The association of the CD247 homodimer is the last step of TcR assembly in the endoplasmic reticulum and is required for transport to the cell surface.

The protein localises to the cell membrane. Functionally, v region of the variable domain of T cell receptor (TR) alpha chain that participates in the antigen recognition. Alpha-beta T cell receptors are antigen specific receptors which are essential to the immune response and are present on the cell surface of T lymphocytes. Recognize peptide-major histocompatibility (MH) (pMH) complexes that are displayed by antigen presenting cells (APC), a prerequisite for efficient T cell adaptive immunity against pathogens. Binding of alpha-beta TR to pMH complex initiates TR-CD3 clustering on the cell surface and intracellular activation of LCK that phosphorylates the ITAM motifs of CD3G, CD3D, CD3E and CD247 enabling the recruitment of ZAP70. In turn ZAP70 phosphorylates LAT, which recruits numerous signaling molecules to form the LAT signalosome. The LAT signalosome propagates signal branching to three major signaling pathways, the calcium, the mitogen-activated protein kinase (MAPK) kinase and the nuclear factor NF-kappa-B (NF-kB) pathways, leading to the mobilization of transcription factors that are critical for gene expression and essential for T cell growth and differentiation. The T cell repertoire is generated in the thymus, by V-(D)-J rearrangement. This repertoire is then shaped by intrathymic selection events to generate a peripheral T cell pool of self-MH restricted, non-autoaggressive T cells. Post-thymic interaction of alpha-beta TR with the pMH complexes shapes TR structural and functional avidity. In Homo sapiens (Human), this protein is T cell receptor alpha variable 38-2/delta variable 8.